A 958-amino-acid polypeptide reads, in one-letter code: Valine--tRNA ligase (958 aa).

Positions 45–55 match the 'HIGH' region motif; that stretch reads PNVTGSLHMGH. The 'KMSKS' region motif lies at 571-575; that stretch reads KMSKS. Lysine 574 is an ATP binding site. A coiled-coil region spans residues 892 to 958; it reads AAERTRLDKE…EALERLKQAS (67 aa).

The protein belongs to the class-I aminoacyl-tRNA synthetase family. ValS type 1 subfamily. Monomer.

It is found in the cytoplasm. It carries out the reaction tRNA(Val) + L-valine + ATP = L-valyl-tRNA(Val) + AMP + diphosphate. Catalyzes the attachment of valine to tRNA(Val). As ValRS can inadvertently accommodate and process structurally similar amino acids such as threonine, to avoid such errors, it has a 'posttransfer' editing activity that hydrolyzes mischarged Thr-tRNA(Val) in a tRNA-dependent manner. This is Valine--tRNA ligase from Bradyrhizobium diazoefficiens (strain JCM 10833 / BCRC 13528 / IAM 13628 / NBRC 14792 / USDA 110).